A 144-amino-acid polypeptide reads, in one-letter code: Kunitz-type elastase inhibitor BrEI (144 aa).

Asn-38 carries an N-linked (GlcNAc...) asparagine glycan. Cys-41 and Cys-88 form a disulfide bridge.

This sequence belongs to the leguminous Kunitz-type inhibitor family.

Inhibitor of porcine pancreatic elastase with a Ki of 27 nM. Does not inhibit human neutrophil elastase, bovine trypsin, human plasma kallikrein or porcine pancreatic kallikrein. The polypeptide is Kunitz-type elastase inhibitor BrEI (Bauhinia rufa (Orchid tree)).